Here is a 340-residue protein sequence, read N- to C-terminus: MNKTAEELDSRNCASESLTNALISITMKFNFIFIITVVLISYCFTWLAIQALWKHNIFSNSTRLILIVCLLNSVVHQTTMLETRITQAYRSVVYDSEPCKLLFRSSDCVFELYLYYPTGYFSTYSVFSLTFDRLISHYKSRYYHMHQYFIATSLLVLQLLLTMFSFYIVFYGVSLAGYVPMCNFRPELTVYYGAINNVRTGVMVSCIIVTMFVYYVCVKSEKQIQKCSYSPGERYSAYENVTTSQSICISIVLQFSCIMISSFGSNLLIHITSKTTVSEEVFYAIVSFLPGVTYANLCLPLVIYFKTKLTTRNRKNRIAVMTSMYGDAGEHIDRLKRSWE.

The next 6 membrane-spanning stretches (helical) occupy residues 29–49 (FNFI…WLAI), 109–129 (VFEL…VFSL), 149–169 (FIAT…FYIV), 198–218 (VRTG…YVCV), 249–269 (ISIV…NLLI), and 285–305 (IVSF…VIYF).

Belongs to the nematode receptor-like protein sra family.

The protein resides in the membrane. The protein is Serpentine receptor class alpha-18 (sra-18) of Caenorhabditis elegans.